We begin with the raw amino-acid sequence, 187 residues long: Large ribosomal subunit protein uL13 (187 aa).

The protein belongs to the universal ribosomal protein uL13 family. Part of the 50S ribosomal subunit.

Functionally, this protein is one of the early assembly proteins of the 50S ribosomal subunit, although it is not seen to bind rRNA by itself. It is important during the early stages of 50S assembly. This chain is Large ribosomal subunit protein uL13, found in Pyrobaculum aerophilum (strain ATCC 51768 / DSM 7523 / JCM 9630 / CIP 104966 / NBRC 100827 / IM2).